A 902-amino-acid chain; its full sequence is Proline-rich transmembrane protein 4 (902 aa).

Residues 1–18 (MAGRGCLELGLFCWVLLA) form the signal peptide. 2 disordered regions span residues 120 to 149 (FTPW…SQPR) and 262 to 337 (PPPL…SGQP). Low complexity predominate over residues 125–139 (SSLPPESTSPLSGPT). Positions 271 to 301 (SSPSPLDSVASPSSASIKTTPVQHDPTVSTS) are enriched in polar residues. The next 5 helical transmembrane spans lie at 371 to 391 (AGAL…LLPW), 393 to 413 (CPPG…AGTT), 431 to 451 (ALAW…GLGL), 465 to 485 (PIGL…AALG), and 501 to 521 (GLHA…SCWG). The residue at position 642 (Ser-642) is a Phosphoserine. 3 disordered regions span residues 700–721 (GARA…TVDF), 771–811 (KTGA…SLCG), and 836–872 (VLSP…ASEL). The span at 703–717 (ANTTQSPASSPSSDC) shows a compositional bias: polar residues. The segment covering 786 to 798 (SPAPPELPSPGAW) has biased composition (pro residues). Composition is skewed to low complexity over residues 799-811 (PPGS…SLCG) and 843-854 (SESSPSLPASGS).

It localises to the membrane. This is Proline-rich transmembrane protein 4 (Prrt4) from Rattus norvegicus (Rat).